A 243-amino-acid chain; its full sequence is Uridine-cytidine kinase B (243 aa).

22–29 (GGTASGKT) is a binding site for ATP.

The protein belongs to the uridine kinase family.

It catalyses the reaction uridine + ATP = UMP + ADP + H(+). The catalysed reaction is cytidine + ATP = CMP + ADP + H(+). It participates in pyrimidine metabolism; CTP biosynthesis via salvage pathway; CTP from cytidine: step 1/3. It functions in the pathway pyrimidine metabolism; UMP biosynthesis via salvage pathway; UMP from uridine: step 1/1. Its function is as follows. Catalyzes the conversion of uridine into uridine monophosphate and cytidine into cytidine monophosphate in the pyrimidine salvage pathway. This Dictyostelium discoideum (Social amoeba) protein is Uridine-cytidine kinase B (udkB).